The following is a 224-amino-acid chain: Ribonuclease 3 (224 aa).

Residues Leu5–Gly127 enclose the RNase III domain. Glu40 serves as a coordination point for Mg(2+). The active site involves Asp44. Mg(2+) is bound by residues Asp113 and Glu116. Glu116 is a catalytic residue. The region spanning Asp154–Gly224 is the DRBM domain.

The protein belongs to the ribonuclease III family. In terms of assembly, homodimer. It depends on Mg(2+) as a cofactor.

It localises to the cytoplasm. The enzyme catalyses Endonucleolytic cleavage to 5'-phosphomonoester.. Functionally, digests double-stranded RNA. Involved in the processing of primary rRNA transcript to yield the immediate precursors to the large and small rRNAs (23S and 16S). Processes some mRNAs, and tRNAs when they are encoded in the rRNA operon. Processes pre-crRNA and tracrRNA of type II CRISPR loci if present in the organism. The polypeptide is Ribonuclease 3 (Legionella pneumophila (strain Lens)).